We begin with the raw amino-acid sequence, 86 residues long: ATP synthase epsilon chain (86 aa).

Belongs to the ATPase epsilon chain family. F-type ATPases have 2 components, CF(1) - the catalytic core - and CF(0) - the membrane proton channel. CF(1) has five subunits: alpha(3), beta(3), gamma(1), delta(1), epsilon(1). CF(0) has three main subunits: a, b and c.

The protein resides in the cell inner membrane. Its function is as follows. Produces ATP from ADP in the presence of a proton gradient across the membrane. The chain is ATP synthase epsilon chain (atpC) from Caulobacter vibrioides (strain ATCC 19089 / CIP 103742 / CB 15) (Caulobacter crescentus).